Reading from the N-terminus, the 141-residue chain is Large ribosomal subunit protein uL11 (141 aa).

It belongs to the universal ribosomal protein uL11 family. In terms of assembly, part of the ribosomal stalk of the 50S ribosomal subunit. Interacts with L10 and the large rRNA to form the base of the stalk. L10 forms an elongated spine to which L12 dimers bind in a sequential fashion forming a multimeric L10(L12)X complex. Post-translationally, one or more lysine residues are methylated.

Forms part of the ribosomal stalk which helps the ribosome interact with GTP-bound translation factors. The sequence is that of Large ribosomal subunit protein uL11 from Nautilia profundicola (strain ATCC BAA-1463 / DSM 18972 / AmH).